Consider the following 280-residue polypeptide: UPF0494 membrane protein SPAC212.01c (280 aa).

The next 4 helical transmembrane spans lie at 107 to 127, 144 to 164, 178 to 198, and 199 to 219; these read WPLLIIWSIIIVFAVDKKFEV, IWVPIAIYVCLLVLMLLSLIF, VIIAVLGAVLGMIIAVLGMII, and AALGMIIAALGATITGLLYFG.

It belongs to the UPF0494 family.

It localises to the membrane. In Schizosaccharomyces pombe (strain 972 / ATCC 24843) (Fission yeast), this protein is UPF0494 membrane protein SPAC212.01c.